Reading from the N-terminus, the 292-residue chain is 2-(5''-triphosphoribosyl)-3'-dephosphocoenzyme-A synthase (292 aa).

It belongs to the CitG/MdcB family.

It carries out the reaction 3'-dephospho-CoA + ATP = 2'-(5''-triphospho-alpha-D-ribosyl)-3'-dephospho-CoA + adenine. In terms of biological role, catalyzes the formation of 2-(5''-triphosphoribosyl)-3'-dephosphocoenzyme-A, the precursor of the prosthetic group of the holo-acyl carrier protein (gamma chain) of citrate lyase, from ATP and dephospho-CoA. This is 2-(5''-triphosphoribosyl)-3'-dephosphocoenzyme-A synthase from Escherichia coli (strain UTI89 / UPEC).